We begin with the raw amino-acid sequence, 192 residues long: Flagellar transcriptional regulator FlhC (192 aa).

Cys137, Cys140, Cys157, and Cys160 together coordinate Zn(2+).

The protein belongs to the FlhC family. Heterohexamer composed of two FlhC and four FlhD subunits. Each FlhC binds a FlhD dimer, forming a heterotrimer, and a hexamer assembles by dimerization of two heterotrimers. Zn(2+) serves as cofactor.

The protein localises to the cytoplasm. Functionally, functions in complex with FlhD as a master transcriptional regulator that regulates transcription of several flagellar and non-flagellar operons by binding to their promoter region. Activates expression of class 2 flagellar genes, including fliA, which is a flagellum-specific sigma factor that turns on the class 3 genes. Also regulates genes whose products function in a variety of physiological pathways. The chain is Flagellar transcriptional regulator FlhC from Escherichia coli O6:H1 (strain CFT073 / ATCC 700928 / UPEC).